Here is a 489-residue protein sequence, read N- to C-terminus: Dentin matrix acidic phosphoprotein 1 (489 aa).

Residues 1–16 (MKTVILLTFLWGLSCA) form the signal peptide. The segment at 22-489 (YQNTESESSE…QDDNDCQDGY (468 aa)) is disordered. Residues 82–100 (DKEEDEDDSGDDTFGDEDN) are compositionally biased toward acidic residues. Positions 123–138 (DTTQSSEDSTSQENSA) are enriched in low complexity. Basic and acidic residues-rich tracts occupy residues 143–159 (SDSK…RPEA) and 217–227 (RSEESKGDHEP). Positions 263–274 (DSNSRETQSVST) are enriched in polar residues. Basic and acidic residues predominate over residues 275–287 (EDFRSKEESRSET). The segment covering 316–332 (EPSQESSSESQEGVASE) has biased composition (low complexity). The short motif at 334-336 (RGD) is the Cell attachment site element. Asn-340 carries N-linked (GlcNAc...) asparagine glycosylation. Over residues 346-358 (DQRDSESSEEDRL) the composition is skewed to basic and acidic residues. A glycan (N-linked (GlcNAc...) asparagine) is linked at Asn-378. Residues 386–397 (ESQESAQDEDSS) show a composition bias toward acidic residues. The segment covering 398-419 (SQEGLQSQSASRESRSQESQSE) has biased composition (low complexity). Residues 420 to 442 (QDSRSEENRDSDSQDSSRSKEES) are compositionally biased toward basic and acidic residues. The N-linked (GlcNAc...) asparagine glycan is linked to Asn-443. Residues 453–478 (EDNHPKNIEADNRKLIVDAYHNKPIG) show a composition bias toward basic and acidic residues. Residues 479 to 489 (DQDDNDCQDGY) show a composition bias toward acidic residues.

In terms of assembly, interacts with importin alpha. In terms of processing, phosphorylated in the cytosol and extracellular matrix and unphosphorylated in the nucleus. Phosphorylation is necessary for nucleocytoplasmic transport and may be catalyzed by a nuclear isoform of CK2 and can be augmented by calcium. Phosphorylated (in vitro) by FAM20C in the extracellular medium at sites within the S-x-E/pS motif. In terms of tissue distribution, expressed in tooth particularly in odontoblast and ameloblast.

It is found in the nucleus. The protein resides in the cytoplasm. It localises to the secreted. Its subcellular location is the extracellular space. The protein localises to the extracellular matrix. Functionally, may have a dual function during osteoblast differentiation. In the nucleus of undifferentiated osteoblasts, unphosphorylated form acts as a transcriptional component for activation of osteoblast-specific genes like osteocalcin. During the osteoblast to osteocyte transition phase it is phosphorylated and exported into the extracellular matrix, where it regulates nucleation of hydroxyapatite. The chain is Dentin matrix acidic phosphoprotein 1 (Dmp1) from Rattus norvegicus (Rat).